The following is a 502-amino-acid chain: Lysine--tRNA ligase (502 aa).

Positions 413 and 420 each coordinate Mg(2+).

This sequence belongs to the class-II aminoacyl-tRNA synthetase family. In terms of assembly, homodimer. The cofactor is Mg(2+).

Its subcellular location is the cytoplasm. It carries out the reaction tRNA(Lys) + L-lysine + ATP = L-lysyl-tRNA(Lys) + AMP + diphosphate. This is Lysine--tRNA ligase from Haemophilus influenzae (strain 86-028NP).